Reading from the N-terminus, the 721-residue chain is Polyribonucleotide nucleotidyltransferase (721 aa).

Residues D495 and D501 each contribute to the Mg(2+) site. The region spanning 562 to 621 is the KH domain; it reads PRLLSFRIDPELIGTVIGPGGRTIKGITERTNTKIDIEDGGIVTIASHDGAAAEEAQKII. The 69-residue stretch at 631-699 folds into the S1 motif domain; that stretch reads GEIFPGVVTR…SRGRINLTLR (69 aa).

It belongs to the polyribonucleotide nucleotidyltransferase family. Mg(2+) serves as cofactor.

It is found in the cytoplasm. The catalysed reaction is RNA(n+1) + phosphate = RNA(n) + a ribonucleoside 5'-diphosphate. Functionally, involved in mRNA degradation. Catalyzes the phosphorolysis of single-stranded polyribonucleotides processively in the 3'- to 5'-direction. This Prochlorococcus marinus subsp. pastoris (strain CCMP1986 / NIES-2087 / MED4) protein is Polyribonucleotide nucleotidyltransferase.